The primary structure comprises 77 residues: uncharacterized protein (77 aa).

A helical membrane pass occupies residues 57 to 76 (NSAVICTLIANLMAFFMLLT).

It localises to the membrane. This is an uncharacterized protein from Schizosaccharomyces pombe (strain 972 / ATCC 24843) (Fission yeast).